The following is a 391-amino-acid chain: Phosphoglycerate kinase (391 aa).

Substrate is bound by residues Asp-21 to Asn-23, Arg-36, His-59 to Arg-62, Arg-113, and Arg-146. Residues Lys-197, Glu-319, and Gly-345–Thr-348 contribute to the ATP site.

It belongs to the phosphoglycerate kinase family. In terms of assembly, monomer.

It localises to the cytoplasm. The catalysed reaction is (2R)-3-phosphoglycerate + ATP = (2R)-3-phospho-glyceroyl phosphate + ADP. Its pathway is carbohydrate degradation; glycolysis; pyruvate from D-glyceraldehyde 3-phosphate: step 2/5. This is Phosphoglycerate kinase from Xylella fastidiosa (strain Temecula1 / ATCC 700964).